Here is a 102-residue protein sequence, read N- to C-terminus: Protein translation factor SUI1 homolog (102 aa).

Belongs to the SUI1 family.

In Methanosarcina mazei (strain ATCC BAA-159 / DSM 3647 / Goe1 / Go1 / JCM 11833 / OCM 88) (Methanosarcina frisia), this protein is Protein translation factor SUI1 homolog.